A 213-amino-acid polypeptide reads, in one-letter code: Orotate phosphoribosyltransferase (213 aa).

Lys-26 is a binding site for 5-phospho-alpha-D-ribose 1-diphosphate. An orotate-binding site is contributed by 34-35 (FF). 5-phospho-alpha-D-ribose 1-diphosphate-binding positions include 72–73 (YK), Arg-99, Lys-100, Lys-103, His-105, and 124–132 (DDVITAGTA). The orotate site is built by Thr-128 and Arg-156.

It belongs to the purine/pyrimidine phosphoribosyltransferase family. PyrE subfamily. As to quaternary structure, homodimer. Mg(2+) serves as cofactor.

The enzyme catalyses orotidine 5'-phosphate + diphosphate = orotate + 5-phospho-alpha-D-ribose 1-diphosphate. Its pathway is pyrimidine metabolism; UMP biosynthesis via de novo pathway; UMP from orotate: step 1/2. Catalyzes the transfer of a ribosyl phosphate group from 5-phosphoribose 1-diphosphate to orotate, leading to the formation of orotidine monophosphate (OMP). The protein is Orotate phosphoribosyltransferase of Vibrio parahaemolyticus serotype O3:K6 (strain RIMD 2210633).